The primary structure comprises 646 residues: Rho guanine nucleotide exchange factor 7 (646 aa).

The region spanning 6–65 is the SH3 domain; it reads NSQLVVRAKFNFQQTNEDELSFSKGDVIHVTRVEEGGWWEGTHNGRTGWFPSNYVREIKP. 3 positions are modified to phosphoserine: S7, S71, and S79. The DH domain occupies 93 to 273; that stretch reads YYNVVLQNIL…KNLSAQCQEV (181 aa). Positions 295–400 constitute a PH domain; sequence DIKTLGSVTY…WVEHLQRQTK (106 aa). S340 bears the Phosphoserine mark. Disordered regions lie at residues 402–464 and 500–520; these read TSVS…GPLE and KTMK…DEEF. Positions 415 to 428 are enriched in polar residues; sequence PSHTLPSHPLTPSS. Residues 500–512 show a composition bias toward basic residues; the sequence is KTMKKLLPKRKPE. Residues S516 and S560 each carry the phosphoserine modification.

In terms of assembly, interacts with SCRIB; interaction is direct and may play a role in regulation of apoptosis. Interacts with PAK kinases through the SH3 domain. Interacts with GIT1 and probably TGFB1I1. Interacts with ITCH and PARVB. Interacts with FRMPD4 (via N-terminus). Interacts with CaMK1. Interacts with PTK2/FAK1 and RAC1. Interacts with BIN2. Interacts with YWHAZ. Interacts (via PH domain) with NOX1 (via FAD-binding FR-type domain). Post-translationally, phosphorylated on Ser-516 by CaMK1; enhancement of GEF activity and downstream activation of RAC1. Phosphorylated by PTK2/FAK1; this promotes interaction with RAC1.

The protein localises to the cell junction. The protein resides in the focal adhesion. It localises to the cell projection. Its subcellular location is the ruffle. It is found in the cytoplasm. The protein localises to the cell cortex. The protein resides in the lamellipodium. Its function is as follows. Acts as a RAC1 guanine nucleotide exchange factor (GEF) and can induce membrane ruffling. Functions in cell migration, attachment and cell spreading. Promotes targeting of RAC1 to focal adhesions. May function as a positive regulator of apoptosis. Downstream of NMDA receptors and CaMKK-CaMK1 signaling cascade, promotes the formation of spines and synapses in hippocampal neurons. The sequence is that of Rho guanine nucleotide exchange factor 7 (Arhgef7) from Rattus norvegicus (Rat).